The sequence spans 66 residues: Large ribosomal subunit protein uL29 (66 aa).

The protein belongs to the universal ribosomal protein uL29 family.

The polypeptide is Large ribosomal subunit protein uL29 (Fervidobacterium nodosum (strain ATCC 35602 / DSM 5306 / Rt17-B1)).